A 701-amino-acid chain; its full sequence is Polyphosphate kinase (701 aa).

Position 45 (asparagine 45) interacts with ATP. Mg(2+)-binding residues include arginine 373 and arginine 403. Positions 428–462 (PGMKIHAKLLLITRKEGDEFVRYAHIGTGNFHERT) constitute a PLD phosphodiesterase 1 domain. The Phosphohistidine intermediate role is filled by histidine 433. ATP is bound by residues tyrosine 466, arginine 562, and histidine 590. The PLD phosphodiesterase 2 domain occupies 585–615 (DRFLEHPRVLVVHNDGNPQVFISSADWMERN).

Belongs to the polyphosphate kinase 1 (PPK1) family. It depends on Mg(2+) as a cofactor. In terms of processing, an intermediate of this reaction is the autophosphorylated ppk in which a phosphate is covalently linked to a histidine residue through a N-P bond.

It catalyses the reaction [phosphate](n) + ATP = [phosphate](n+1) + ADP. Catalyzes the reversible transfer of the terminal phosphate of ATP to form a long-chain polyphosphate (polyP). This is Polyphosphate kinase from Vibrio cholerae serotype O1 (strain ATCC 39315 / El Tor Inaba N16961).